The following is a 586-amino-acid chain: Frizzled-10-A (586 aa).

The N-terminal stretch at 1–26 (MDVSGVTGLLRGTALLLVLAAALCSA) is a signal peptide. Topologically, residues 27-230 (ISSINPDRSG…DVYWSKDDKK (204 aa)) are extracellular. Positions 35–156 (SGDGRCQAIE…NDPNYLCMEA (122 aa)) constitute an FZ domain. Cystine bridges form between C40–C101, C48–C94, C85–C123, C112–C153, and C116–C140. N-linked (GlcNAc...) asparagine glycosylation occurs at N54. N159 carries N-linked (GlcNAc...) asparagine glycosylation. The disordered stretch occupies residues 161–199 (TDETPRGSSMLPPIFRPQRPSSGHEIYPKDPTSRSSCEN). The helical transmembrane segment at 231–251 (FAFIWIAIWSILCFFSSAFTV) threads the bilayer. Residues 252 to 267 (LTFLVDPLRFKYPERP) are Cytoplasmic-facing. Residues 268–288 (IIFLSMCYCVYSVGYIIRLFA) form a helical membrane-spanning segment. Topologically, residues 289–315 (GADSIACDRDSGQLYVIQEGLESTGCT) are extracellular. Residues 316-336 (IVFLILYYFGMASSLWWVILT) form a helical membrane-spanning segment. The Cytoplasmic segment spans residues 337–356 (LTWFLAAGKKWGHEAIEANS). A helical transmembrane segment spans residues 357–377 (SYFHLAAWAIPAVKTIMILVM). Topologically, residues 378-401 (RRVAGDELTGVCYVGSMDVNALTG) are extracellular. The helical transmembrane segment at 402–422 (FVLIPLACYLIIGTSFILSGF) threads the bilayer. Residues 423-448 (VALFHIRRVMKTGGENTDKLEKLMVR) are Cytoplasmic-facing. A helical membrane pass occupies residues 449-469 (IGVFSVLYTVPATCVIACYFY). The Extracellular portion of the chain corresponds to 470–507 (ERLNMDFWKILATQDKCKMDSQTKTLDCTMTSSIPAVE). Residues 508-528 (IFMVKIFMLLVVGITSGMWIW) traverse the membrane as a helical segment. Over 529–586 (TSKTVQSWQNVFSKRLKKRNRSKPASVITSAGIYKKPQHPPKVHHGKYESALQSPTCV) the chain is Cytoplasmic. The short motif at 531–536 (KTVQSW) is the Lys-Thr-X-X-X-Trp motif, mediates interaction with the PDZ domain of Dvl family members element. A disordered region spans residues 563–586 (KKPQHPPKVHHGKYESALQSPTCV). The segment covering 564–573 (KPQHPPKVHH) has biased composition (basic residues). A PDZ-binding motif is present at residues 584–586 (TCV).

This sequence belongs to the G-protein coupled receptor Fz/Smo family. In terms of tissue distribution, expressed in liver, lung, brain, testis, stomach, kidney, eye, skeletal muscle and skin.

The protein localises to the cell membrane. Functionally, receptor for Wnt proteins. Most of frizzled receptors are coupled to the beta-catenin canonical signaling pathway, which leads to the activation of disheveled proteins, inhibition of GSK-3 kinase, nuclear accumulation of beta-catenin and activation of Wnt target genes. A second signaling pathway involving PKC and calcium fluxes has been seen for some family members, but it is not yet clear if it represents a distinct pathway or if it can be integrated in the canonical pathway, as PKC seems to be required for Wnt-mediated inactivation of GSK-3 kinase. Both pathways seem to involve interactions with G-proteins. May be involved in transduction and intercellular transmission of polarity information during tissue morphogenesis and/or in differentiated tissues. Activated by Wnt8. Could have an antagonizing activity in the morphogenesis during development. The polypeptide is Frizzled-10-A (fzd10-a) (Xenopus laevis (African clawed frog)).